The sequence spans 215 residues: Pyridoxine/pyridoxamine 5'-phosphate oxidase (215 aa).

Substrate is bound by residues 9–12 and Lys69; that span reads RRDY. Residues 64–69, 79–80, Lys86, and Gln108 contribute to the FMN site; these read RILLLK and FT. 3 residues coordinate substrate: Tyr126, Arg130, and Ser134. Residues 143 to 144 and Trp188 each bind FMN; that span reads QS. 194 to 196 provides a ligand contact to substrate; sequence RLH. Arg198 is an FMN binding site.

This sequence belongs to the pyridoxamine 5'-phosphate oxidase family. Homodimer. The cofactor is FMN.

It catalyses the reaction pyridoxamine 5'-phosphate + O2 + H2O = pyridoxal 5'-phosphate + H2O2 + NH4(+). The enzyme catalyses pyridoxine 5'-phosphate + O2 = pyridoxal 5'-phosphate + H2O2. The protein operates within cofactor metabolism; pyridoxal 5'-phosphate salvage; pyridoxal 5'-phosphate from pyridoxamine 5'-phosphate: step 1/1. It functions in the pathway cofactor metabolism; pyridoxal 5'-phosphate salvage; pyridoxal 5'-phosphate from pyridoxine 5'-phosphate: step 1/1. Functionally, catalyzes the oxidation of either pyridoxine 5'-phosphate (PNP) or pyridoxamine 5'-phosphate (PMP) into pyridoxal 5'-phosphate (PLP). This chain is Pyridoxine/pyridoxamine 5'-phosphate oxidase, found in Pseudomonas fluorescens (strain SBW25).